A 159-amino-acid chain; its full sequence is 2-C-methyl-D-erythritol 2,4-cyclodiphosphate synthase (159 aa).

Residues Asp-8 and His-10 each coordinate a divalent metal cation. 4-CDP-2-C-methyl-D-erythritol 2-phosphate-binding positions include 8-10 and 34-35; these read DVH and HS. Position 42 (His-42) interacts with a divalent metal cation. 4-CDP-2-C-methyl-D-erythritol 2-phosphate contacts are provided by residues 56 to 58, 61 to 65, 100 to 106, 132 to 135, Phe-139, and Arg-142; these read DIG, FPDTD, AQAPKML, and TTTE.

This sequence belongs to the IspF family. Homotrimer. A divalent metal cation serves as cofactor.

The catalysed reaction is 4-CDP-2-C-methyl-D-erythritol 2-phosphate = 2-C-methyl-D-erythritol 2,4-cyclic diphosphate + CMP. Its pathway is isoprenoid biosynthesis; isopentenyl diphosphate biosynthesis via DXP pathway; isopentenyl diphosphate from 1-deoxy-D-xylulose 5-phosphate: step 4/6. In terms of biological role, involved in the biosynthesis of isopentenyl diphosphate (IPP) and dimethylallyl diphosphate (DMAPP), two major building blocks of isoprenoid compounds. Catalyzes the conversion of 4-diphosphocytidyl-2-C-methyl-D-erythritol 2-phosphate (CDP-ME2P) to 2-C-methyl-D-erythritol 2,4-cyclodiphosphate (ME-CPP) with a corresponding release of cytidine 5-monophosphate (CMP). This is 2-C-methyl-D-erythritol 2,4-cyclodiphosphate synthase from Salmonella arizonae (strain ATCC BAA-731 / CDC346-86 / RSK2980).